The following is a 137-amino-acid chain: ATP synthase epsilon chain, chloroplastic (137 aa).

The protein belongs to the ATPase epsilon chain family. As to quaternary structure, F-type ATPases have 2 components, CF(1) - the catalytic core - and CF(0) - the membrane proton channel. CF(1) has five subunits: alpha(3), beta(3), gamma(1), delta(1), epsilon(1). CF(0) has three main subunits: a, b and c.

The protein localises to the plastid. Its subcellular location is the chloroplast thylakoid membrane. Functionally, produces ATP from ADP in the presence of a proton gradient across the membrane. In Hordeum vulgare (Barley), this protein is ATP synthase epsilon chain, chloroplastic.